Here is a 293-residue protein sequence, read N- to C-terminus: Elongation factor Ts (293 aa).

An involved in Mg(2+) ion dislocation from EF-Tu region spans residues 80 to 83; that stretch reads TDFV.

Belongs to the EF-Ts family.

It is found in the cytoplasm. Functionally, associates with the EF-Tu.GDP complex and induces the exchange of GDP to GTP. It remains bound to the aminoacyl-tRNA.EF-Tu.GTP complex up to the GTP hydrolysis stage on the ribosome. This chain is Elongation factor Ts, found in Aeromonas salmonicida (strain A449).